Here is a 345-residue protein sequence, read N- to C-terminus: L-threonine 3-dehydrogenase (345 aa).

Residue cysteine 39 coordinates Zn(2+). Catalysis depends on charge relay system residues threonine 41 and histidine 44. Zn(2+) contacts are provided by histidine 64, glutamate 65, cysteine 94, cysteine 97, cysteine 100, and cysteine 108. Residues isoleucine 176, aspartate 196, arginine 201, 263–265 (LGI), and 287–288 (VY) contribute to the NAD(+) site.

This sequence belongs to the zinc-containing alcohol dehydrogenase family. As to quaternary structure, homotetramer. The cofactor is Zn(2+).

The protein resides in the cytoplasm. It carries out the reaction L-threonine + NAD(+) = (2S)-2-amino-3-oxobutanoate + NADH + H(+). It participates in amino-acid degradation; L-threonine degradation via oxydo-reductase pathway; glycine from L-threonine: step 1/2. Its function is as follows. Catalyzes the NAD(+)-dependent oxidation of L-threonine to 2-amino-3-ketobutyrate. In Anaeromyxobacter dehalogenans (strain 2CP-C), this protein is L-threonine 3-dehydrogenase.